We begin with the raw amino-acid sequence, 400 residues long: NADH-quinone oxidoreductase subunit D (400 aa).

This sequence belongs to the complex I 49 kDa subunit family. NDH-1 is composed of 14 different subunits. Subunits NuoB, C, D, E, F, and G constitute the peripheral sector of the complex.

It is found in the cell inner membrane. The enzyme catalyses a quinone + NADH + 5 H(+)(in) = a quinol + NAD(+) + 4 H(+)(out). NDH-1 shuttles electrons from NADH, via FMN and iron-sulfur (Fe-S) centers, to quinones in the respiratory chain. The immediate electron acceptor for the enzyme in this species is believed to be menaquinone. Couples the redox reaction to proton translocation (for every two electrons transferred, four hydrogen ions are translocated across the cytoplasmic membrane), and thus conserves the redox energy in a proton gradient. This is NADH-quinone oxidoreductase subunit D from Prosthecochloris aestuarii (strain DSM 271 / SK 413).